The chain runs to 163 residues: Transcription antitermination protein NusB (163 aa).

It belongs to the NusB family.

Functionally, involved in transcription antitermination. Required for transcription of ribosomal RNA (rRNA) genes. Binds specifically to the boxA antiterminator sequence of the ribosomal RNA (rrn) operons. This Chlorobium luteolum (strain DSM 273 / BCRC 81028 / 2530) (Pelodictyon luteolum) protein is Transcription antitermination protein NusB.